Consider the following 157-residue polypeptide: Transcription elongation factor GreB (157 aa).

This sequence belongs to the GreA/GreB family. GreB subfamily.

In terms of biological role, necessary for efficient RNA polymerase transcription elongation past template-encoded arresting sites. The arresting sites in DNA have the property of trapping a certain fraction of elongating RNA polymerases that pass through, resulting in locked ternary complexes. Cleavage of the nascent transcript by cleavage factors such as GreA or GreB allows the resumption of elongation from the new 3'terminus. GreB releases sequences of up to 9 nucleotides in length. This is Transcription elongation factor GreB from Salmonella typhimurium (strain LT2 / SGSC1412 / ATCC 700720).